Reading from the N-terminus, the 161-residue chain is ATP synthase subunit b' (161 aa).

Residues 30 to 47 (VMAIQFLVLAALLNKLFY) traverse the membrane as a helical segment.

This sequence belongs to the ATPase B chain family. As to quaternary structure, F-type ATPases have 2 components, F(1) - the catalytic core - and F(0) - the membrane proton channel. F(1) has five subunits: alpha(3), beta(3), gamma(1), delta(1), epsilon(1). F(0) has four main subunits: a(1), b(1), b'(1) and c(10-14). The alpha and beta chains form an alternating ring which encloses part of the gamma chain. F(1) is attached to F(0) by a central stalk formed by the gamma and epsilon chains, while a peripheral stalk is formed by the delta, b and b' chains.

The protein localises to the cellular thylakoid membrane. Functionally, f(1)F(0) ATP synthase produces ATP from ADP in the presence of a proton or sodium gradient. F-type ATPases consist of two structural domains, F(1) containing the extramembraneous catalytic core and F(0) containing the membrane proton channel, linked together by a central stalk and a peripheral stalk. During catalysis, ATP synthesis in the catalytic domain of F(1) is coupled via a rotary mechanism of the central stalk subunits to proton translocation. Its function is as follows. Component of the F(0) channel, it forms part of the peripheral stalk, linking F(1) to F(0). The b'-subunit is a diverged and duplicated form of b found in plants and photosynthetic bacteria. The polypeptide is ATP synthase subunit b' (Picosynechococcus sp. (strain ATCC 27264 / PCC 7002 / PR-6) (Agmenellum quadruplicatum)).